Consider the following 667-residue polypeptide: Cylicin-1 (667 aa).

2 disordered regions span residues Pro-121–Val-251 and Ser-275–Ser-634. The segment covering Lys-129–Pro-172 has biased composition (basic and acidic residues). The segment covering Ser-173–Ser-182 has biased composition (low complexity). Residues Ser-187–Asp-197 show a composition bias toward basic and acidic residues. Positions Ser-223–Ser-237 are enriched in low complexity. Residues Asp-238 to Val-251 show a composition bias toward polar residues. Basic and acidic residues-rich tracts occupy residues Lys-284–Glu-326, Ser-345–Lys-371, Ser-380–Glu-394, Ser-417–Glu-431, Gly-438–Val-464, Ser-483–Thr-506, Ser-521–Thr-533, Lys-549–Asp-558, and Asp-583–Arg-593. 9 repeat units span residues Ala-287–Asp-305, Ala-306–Asp-337, Ala-338–Asp-368, Ala-369–Asp-405, Ala-406–Asn-442, Ala-443–Asp-475, Ala-476–Lys-516, Val-517–Tyr-547, and Leu-548–Gly-569. The tract at residues Ala-287 to Gly-569 is 9 X approximate tandem repeats. Positions Pro-624–Pro-633 are enriched in pro residues.

As to quaternary structure, interacts with proteins of spermatozoa head including ACTL7A, CCIN, FAM209A and SPACA1; the interactions may be necessary for proper acrosome attachment to the nuclear envelope. Testis.

It localises to the cytoplasm. Its subcellular location is the cytoskeleton. The protein localises to the perinuclear theca. The protein resides in the calyx. Functionally, plays a role in the establishment of normal sperm morphology during spermatogenesis and is required for acrosome attachment to the nuclear envelope. The polypeptide is Cylicin-1 (CYLC1) (Bos taurus (Bovine)).